The sequence spans 326 residues: Delta-aminolevulinic acid dehydratase (326 aa).

Residues Cys119, Cys121, and Cys129 each coordinate Zn(2+). The active-site Schiff-base intermediate with substrate is Lys198. Arg208 and Arg220 together coordinate 5-aminolevulinate. Residue Glu236 participates in Mg(2+) binding. Residue Lys251 is the Schiff-base intermediate with substrate of the active site. The 5-aminolevulinate site is built by Ser277 and Tyr316.

It belongs to the ALAD family. As to quaternary structure, homooctamer. The cofactor is Zn(2+).

The enzyme catalyses 2 5-aminolevulinate = porphobilinogen + 2 H2O + H(+). It participates in porphyrin-containing compound metabolism; protoporphyrin-IX biosynthesis; coproporphyrinogen-III from 5-aminolevulinate: step 1/4. Catalyzes an early step in the biosynthesis of tetrapyrroles. Binds two molecules of 5-aminolevulinate per subunit, each at a distinct site, and catalyzes their condensation to form porphobilinogen. In Synechococcus elongatus (strain ATCC 33912 / PCC 7942 / FACHB-805) (Anacystis nidulans R2), this protein is Delta-aminolevulinic acid dehydratase (hemB).